The sequence spans 504 residues: Cytochrome P450 4A24 (504 aa).

The next 2 membrane-spanning stretches (helical) occupy residues 6–26 (LASA…LLLL) and 112–132 (VVYR…NGQT). Cys-451 contacts heme.

It belongs to the cytochrome P450 family. Heme serves as cofactor.

It is found in the endoplasmic reticulum membrane. It catalyses the reaction an omega-methyl-long-chain fatty acid + reduced [NADPH--hemoprotein reductase] + O2 = an omega-hydroxy-long-chain fatty acid + oxidized [NADPH--hemoprotein reductase] + H2O + H(+). In terms of biological role, catalyzes the omega- and (omega-1)-hydroxylation of various fatty acids such as laurate and palmitate. Has no activity toward taurochenodeoxycholic acid. The chain is Cytochrome P450 4A24 (CYP4A24) from Sus scrofa (Pig).